The chain runs to 145 residues: D-aminoacyl-tRNA deacylase (145 aa).

The Gly-cisPro motif, important for rejection of L-amino acids motif lies at G137–P138.

Belongs to the DTD family. In terms of assembly, homodimer.

Its subcellular location is the cytoplasm. The enzyme catalyses glycyl-tRNA(Ala) + H2O = tRNA(Ala) + glycine + H(+). It catalyses the reaction a D-aminoacyl-tRNA + H2O = a tRNA + a D-alpha-amino acid + H(+). Functionally, an aminoacyl-tRNA editing enzyme that deacylates mischarged D-aminoacyl-tRNAs. Also deacylates mischarged glycyl-tRNA(Ala), protecting cells against glycine mischarging by AlaRS. Acts via tRNA-based rather than protein-based catalysis; rejects L-amino acids rather than detecting D-amino acids in the active site. By recycling D-aminoacyl-tRNA to D-amino acids and free tRNA molecules, this enzyme counteracts the toxicity associated with the formation of D-aminoacyl-tRNA entities in vivo and helps enforce protein L-homochirality. The chain is D-aminoacyl-tRNA deacylase from Pseudomonas aeruginosa (strain LESB58).